We begin with the raw amino-acid sequence, 52 residues long: Lantibiotic gallidermin (52 aa).

A propeptide spanning residues 1–30 (MEAVKEKNELFDLDVKVNAKESNDSGAEPR) is cleaved from the precursor. Positions 33–37 (SKFLC) form a cross-link, lanthionine (Ser-Cys). Positions 38–41 (TPGC) form a cross-link, beta-methyllanthionine (Thr-Cys). At threonine 44 the chain carries (Z)-2,3-didehydrobutyrine. Positions 46-51 (SFNSYC) form a cross-link, lanthionine (Ser-Cys). The segment at residues 49 to 52 (SYCC) is a cross-link (S-(2-aminovinyl)-D-cysteine (Ser-Cys)).

The protein belongs to the type A lantibiotic family. In terms of processing, maturation of lantibiotics involves the enzymatic conversion of Thr, and Ser into dehydrated AA and the formation of thioether bonds with cysteine. The C-terminal lanthionine undergoes decarboxylation. This is followed by membrane translocation and cleavage of the modified precursor. The structure of the 2,3-didehydrobutyrine is not discussed in PubMed:1932575. However, in Fig. 5 the NMR model appears to have the Z-isomer.

In terms of biological role, lanthionine-containing peptide antibiotic (lantibiotic) active on Gram-positive bacteria. The bactericidal activity of lantibiotics is based on depolarization of energized bacterial cytoplasmic membranes, initiated by the formation of aqueous transmembrane pores. The protein is Lantibiotic gallidermin (gdmA) of Staphylococcus gallinarum.